The sequence spans 242 residues: MAETISPRYSRILLKLSGEALSGNKDMGIDAQVLDQMSLSIAHLVGLGVQVGIVVGGGNLYRGSQLQKDGLVGRVTGDQMGMLATVMNGLAMRDALVRRNIRTRLMSALPIGTVVESYSSRDAIRHLSQGEVCVFVAGTGNPFFTTDTAACLRGIEIEANLILKATKVDGVYNKDPSKYEDAVKYDHLTFDQVLDEKLGVMDLTAICLCRDHNVPLQVFDMNKSGALLSVVMGEKEGTRVTK.

Lys15–Gly18 is an ATP binding site. Gly57 provides a ligand contact to UMP. ATP is bound by residues Gly58 and Arg62. UMP-binding positions include Asp78 and Thr139 to Thr146. ATP contacts are provided by Thr166, Tyr172, and Asp175.

The protein belongs to the UMP kinase family. In terms of assembly, homohexamer.

The protein localises to the cytoplasm. The catalysed reaction is UMP + ATP = UDP + ADP. The protein operates within pyrimidine metabolism; CTP biosynthesis via de novo pathway; UDP from UMP (UMPK route): step 1/1. Its activity is regulated as follows. Inhibited by UTP. In terms of biological role, catalyzes the reversible phosphorylation of UMP to UDP. In Acinetobacter baumannii (strain ATCC 17978 / DSM 105126 / CIP 53.77 / LMG 1025 / NCDC KC755 / 5377), this protein is Uridylate kinase.